The primary structure comprises 216 residues: Large ribosomal subunit protein uL1 (216 aa).

The protein belongs to the universal ribosomal protein uL1 family.

The chain is Large ribosomal subunit protein uL1 from Oryza sativa subsp. indica (Rice).